The following is a 161-amino-acid chain: Peroxynitrite isomerase 1 (161 aa).

The short motif at 17 to 23 (GTWTGRG) is the GXWXGXG element. Position 152 (histidine 152) interacts with heme b.

Belongs to the nitrobindin family. In terms of assembly, homodimer. Heme b is required as a cofactor.

The catalysed reaction is peroxynitrite = nitrate. Its pathway is nitrogen metabolism. Heme-binding protein able to scavenge peroxynitrite and to protect free L-tyrosine against peroxynitrite-mediated nitration, by acting as a peroxynitrite isomerase that converts peroxynitrite to nitrate. Therefore, this protein likely plays a role in peroxynitrite sensing and in the detoxification of reactive nitrogen and oxygen species (RNS and ROS, respectively). Is able to bind nitric oxide (NO) in vitro, but may act as a sensor of peroxynitrite levels in vivo. The polypeptide is Peroxynitrite isomerase 1 (Mycolicibacterium paratuberculosis (strain ATCC BAA-968 / K-10) (Mycobacterium paratuberculosis)).